A 488-amino-acid chain; its full sequence is NAD-reducing hydrogenase HoxS subunit beta (488 aa).

Ni(2+)-binding residues include Cys62, Cys65, Cys458, and Cys461.

Belongs to the [NiFe]/[NiFeSe] hydrogenase large subunit family. In terms of assembly, tetramer of an alpha and a gamma subunits (flavin-containing dimer), and a delta and a nickel-containing beta subunits (hydrogenase dimer). Requires FMN as cofactor. Ni(2+) serves as cofactor.

The protein resides in the cytoplasm. The catalysed reaction is H2 + NAD(+) = NADH + H(+). In Cupriavidus necator (strain ATCC 17699 / DSM 428 / KCTC 22496 / NCIMB 10442 / H16 / Stanier 337) (Ralstonia eutropha), this protein is NAD-reducing hydrogenase HoxS subunit beta (hoxH).